Here is a 432-residue protein sequence, read N- to C-terminus: Adenosylhomocysteinase (432 aa).

Positions 56, 131, and 156 each coordinate substrate. 157–159 (TTT) contacts NAD(+). Substrate-binding residues include Lys186 and Asp190. NAD(+) is bound by residues Asn191, 222–227 (GDVGKG), Glu243, 299–301 (IGH), and Asn346.

It belongs to the adenosylhomocysteinase family. NAD(+) serves as cofactor.

It catalyses the reaction S-adenosyl-L-homocysteine + H2O = L-homocysteine + adenosine. It participates in amino-acid biosynthesis; L-homocysteine biosynthesis; L-homocysteine from S-adenosyl-L-homocysteine: step 1/1. Its function is as follows. Adenosylhomocysteine is a competitive inhibitor of S-adenosyl-L-methionine-dependent methyl transferase reactions; therefore adenosylhomocysteinase may play a key role in the control of methylations via regulation of the intracellular concentration of adenosylhomocysteine. This is Adenosylhomocysteinase (Ahcy13) from Anopheles gambiae (African malaria mosquito).